A 750-amino-acid chain; its full sequence is Photosystem I P700 chlorophyll a apoprotein A1 (750 aa).

A run of 8 helical transmembrane segments spans residues 70 to 93, 156 to 179, 195 to 219, 291 to 309, 346 to 369, 385 to 411, 433 to 455, and 531 to 549; these read VFSAHFGQLSIIFLWLSGMYFHGA, LYCTAIGALIFASLMLFAGWFHYH, LNHHLAGLLGLGSLSWAGHQIHVSL, IAHHHLAIAILFLIAGHMY, WHAQLSLNLAMLGSTTIVVAHHMY, LSLFTHHMWIGGFLIVGAAAHAAIFMV, AIISHLNWVCIFLGFHSFGLYIH, and FLVHHIHAFTIHVTVLILL. Positions 573 and 582 each coordinate [4Fe-4S] cluster. Transmembrane regions (helical) follow at residues 589–610 and 664–686; these read HVFLGLFWMYNSISVVIFHFSW and LSAYGLFFLGAHFVWAFSLMFLF. His675 serves as a coordination point for chlorophyll a'. The chlorophyll a site is built by Met683 and Tyr691. Trp692 provides a ligand contact to phylloquinone. Residues 724–744 form a helical membrane-spanning segment; the sequence is AVGVTHYLLGGIATTWAFFLA.

The protein belongs to the PsaA/PsaB family. In terms of assembly, the PsaA/B heterodimer binds the P700 chlorophyll special pair and subsequent electron acceptors. PSI consists of a core antenna complex that captures photons, and an electron transfer chain that converts photonic excitation into a charge separation. The eukaryotic PSI reaction center is composed of at least 11 subunits. P700 is a chlorophyll a/chlorophyll a' dimer, A0 is one or more chlorophyll a, A1 is one or both phylloquinones and FX is a shared 4Fe-4S iron-sulfur center. serves as cofactor.

The protein resides in the plastid. Its subcellular location is the chloroplast thylakoid membrane. It catalyses the reaction reduced [plastocyanin] + hnu + oxidized [2Fe-2S]-[ferredoxin] = oxidized [plastocyanin] + reduced [2Fe-2S]-[ferredoxin]. In terms of biological role, psaA and PsaB bind P700, the primary electron donor of photosystem I (PSI), as well as the electron acceptors A0, A1 and FX. PSI is a plastocyanin-ferredoxin oxidoreductase, converting photonic excitation into a charge separation, which transfers an electron from the donor P700 chlorophyll pair to the spectroscopically characterized acceptors A0, A1, FX, FA and FB in turn. Oxidized P700 is reduced on the lumenal side of the thylakoid membrane by plastocyanin. The sequence is that of Photosystem I P700 chlorophyll a apoprotein A1 from Saccharum hybrid (Sugarcane).